Consider the following 354-residue polypeptide: Guanine nucleotide-binding protein G(i) subunit alpha (354 aa).

The N-myristoyl glycine moiety is linked to residue Gly-2. Residue Cys-3 is the site of S-palmitoyl cysteine attachment. The G-alpha domain maps to 32–354 (REVKLLLLGA…KNNLKDCGLF (323 aa)). Positions 35 to 48 (KLLLLGAGESGKST) are G1 motif. GTP is bound by residues 40–47 (GAGESGKS), 175–181 (LRTRVKT), 200–204 (DVGGQ), 269–272 (NKKD), and Ala-326. The Mg(2+) site is built by Ser-47 and Thr-181. Positions 173-181 (DVLRTRVKT) are G2 motif. The tract at residues 196–205 (FKMFDVGGQR) is G3 motif. Positions 265-272 (ILFLNKKD) are G4 motif. Positions 324–329 (TCATDT) are G5 motif.

This sequence belongs to the G-alpha family. G(i/o/t/z) subfamily. In terms of assembly, g proteins are composed of 3 units; alpha, beta and gamma. The alpha chain contains the guanine nucleotide binding site.

In terms of biological role, guanine nucleotide-binding proteins (G proteins) are involved as modulators or transducers in various transmembrane signaling systems. This G protein is involved in 1-methyladenine-induced oocyte maturation. In Patiria pectinifera (Starfish), this protein is Guanine nucleotide-binding protein G(i) subunit alpha.